Here is a 243-residue protein sequence, read N- to C-terminus: Triosephosphate isomerase (243 aa).

9-11 (NWK) lines the substrate pocket. The active-site Electrophile is the His96. Glu165 serves as the catalytic Proton acceptor. Residues Gly171, Ser204, and 225-226 (GG) contribute to the substrate site.

The protein belongs to the triosephosphate isomerase family. As to quaternary structure, homodimer.

The protein localises to the cytoplasm. It carries out the reaction D-glyceraldehyde 3-phosphate = dihydroxyacetone phosphate. It participates in carbohydrate biosynthesis; gluconeogenesis. It functions in the pathway carbohydrate degradation; glycolysis; D-glyceraldehyde 3-phosphate from glycerone phosphate: step 1/1. In terms of biological role, involved in the gluconeogenesis. Catalyzes stereospecifically the conversion of dihydroxyacetone phosphate (DHAP) to D-glyceraldehyde-3-phosphate (G3P). The chain is Triosephosphate isomerase from Synechococcus sp. (strain CC9902).